Here is a 191-residue protein sequence, read N- to C-terminus: Small ribosomal subunit protein uS4A (191 aa).

2 positions are modified to phosphoserine: Ser-50 and Ser-161. The 75-residue stretch at 107–181 (RRLQTQVFKL…CKRKRLRSQE (75 aa)) folds into the S4 RNA-binding domain. Residue Tyr-164 is modified to Phosphotyrosine. The tract at residues 166–191 (GGRPGRCKRKRLRSQEGGEGEEAEEE) is disordered. Ser-179 carries the post-translational modification Phosphoserine.

The protein belongs to the universal ribosomal protein uS4 family. In terms of assembly, component of the small ribosomal subunit (SSU). Mature yeast ribosomes consist of a small (40S) and a large (60S) subunit. The 40S small subunit contains 1 molecule of ribosomal RNA (18S rRNA) and at least 33 different proteins. The large 60S subunit contains 3 rRNA molecules (25S, 5.8S and 5S rRNA) and at least 46 different proteins. Interacts with snoRNA U3. uS11 interacts with MPP10. Component of the ribosomal small subunit (SSU) processome composed of at least 40 protein subunits and snoRNA U3.

The protein resides in the cytoplasm. In terms of biological role, component of the ribosome, a large ribonucleoprotein complex responsible for the synthesis of proteins in the cell. The small ribosomal subunit (SSU) binds messenger RNAs (mRNAs) and translates the encoded message by selecting cognate aminoacyl-transfer RNA (tRNA) molecules. The large subunit (LSU) contains the ribosomal catalytic site termed the peptidyl transferase center (PTC), which catalyzes the formation of peptide bonds, thereby polymerizing the amino acids delivered by tRNAs into a polypeptide chain. The nascent polypeptides leave the ribosome through a tunnel in the LSU and interact with protein factors that function in enzymatic processing, targeting, and the membrane insertion of nascent chains at the exit of the ribosomal tunnel. uS4 is involved in nucleolar processing of pre-18S ribosomal RNA and ribosome assembly. In Schizosaccharomyces pombe (strain 972 / ATCC 24843) (Fission yeast), this protein is Small ribosomal subunit protein uS4A (rps901).